Consider the following 628-residue polypeptide: Beta-galactosidase large subunit (628 aa).

The Proton donor role is filled by Glu468. The Nucleophile role is filled by Glu536.

This sequence belongs to the glycosyl hydrolase 2 family. Heterodimer of a large (LacL) and a small subunit (LacM).

The enzyme catalyses Hydrolysis of terminal non-reducing beta-D-galactose residues in beta-D-galactosides.. In terms of biological role, component of a beta-galactosidase. This is Beta-galactosidase large subunit (lacL) from Lactobacillus acidophilus (strain ATCC 700396 / NCK56 / N2 / NCFM).